Consider the following 253-residue polypeptide: HTH-type transcriptional regulator YdeO (253 aa).

Positions 137–233 (GKVRNIVNMK…GNSPKRVSKE (97 aa)) constitute an HTH araC/xylS-type domain. 2 DNA-binding regions (H-T-H motif) span residues 154-175 (KDICDCLYISESLLKKKLKQEQ) and 200-223 (VNKIAEQCGYASTSYFIYAFRKHF).

In terms of biological role, induces the expression of gadE and mdtEF. Could also regulate the expression of other genes involved in acid resistance. This chain is HTH-type transcriptional regulator YdeO, found in Escherichia coli O157:H7.